The primary structure comprises 380 residues: Anhydro-N-acetylmuramic acid kinase (380 aa).

9–16 (GTSADGVD) contributes to the ATP binding site.

Belongs to the anhydro-N-acetylmuramic acid kinase family.

The catalysed reaction is 1,6-anhydro-N-acetyl-beta-muramate + ATP + H2O = N-acetyl-D-muramate 6-phosphate + ADP + H(+). Its pathway is amino-sugar metabolism; 1,6-anhydro-N-acetylmuramate degradation. It functions in the pathway cell wall biogenesis; peptidoglycan recycling. Functionally, catalyzes the specific phosphorylation of 1,6-anhydro-N-acetylmuramic acid (anhMurNAc) with the simultaneous cleavage of the 1,6-anhydro ring, generating MurNAc-6-P. Is required for the utilization of anhMurNAc either imported from the medium or derived from its own cell wall murein, and thus plays a role in cell wall recycling. This is Anhydro-N-acetylmuramic acid kinase from Synechococcus sp. (strain CC9902).